The sequence spans 337 residues: Ketol-acid reductoisomerase (NADP(+)) (337 aa).

One can recognise a KARI N-terminal Rossmann domain in the interval 2-182 (AKIFYDNDAD…GATRAGVLLT (181 aa)). NADP(+) contacts are provided by residues 25 to 28 (YGSQ), Ser-51, Ser-53, and 83 to 86 (DTSQ). Residue His-108 is part of the active site. Gly-134 serves as a coordination point for NADP(+). One can recognise a KARI C-terminal knotted domain in the interval 183-328 (TFAEETETDL…ANLRKMMPFI (146 aa)). 4 residues coordinate Mg(2+): Asp-191, Glu-195, Glu-227, and Glu-231. Ser-252 contributes to the substrate binding site.

The protein belongs to the ketol-acid reductoisomerase family. Mg(2+) is required as a cofactor.

It carries out the reaction (2R)-2,3-dihydroxy-3-methylbutanoate + NADP(+) = (2S)-2-acetolactate + NADPH + H(+). It catalyses the reaction (2R,3R)-2,3-dihydroxy-3-methylpentanoate + NADP(+) = (S)-2-ethyl-2-hydroxy-3-oxobutanoate + NADPH + H(+). The protein operates within amino-acid biosynthesis; L-isoleucine biosynthesis; L-isoleucine from 2-oxobutanoate: step 2/4. It functions in the pathway amino-acid biosynthesis; L-valine biosynthesis; L-valine from pyruvate: step 2/4. Functionally, involved in the biosynthesis of branched-chain amino acids (BCAA). Catalyzes an alkyl-migration followed by a ketol-acid reduction of (S)-2-acetolactate (S2AL) to yield (R)-2,3-dihydroxy-isovalerate. In the isomerase reaction, S2AL is rearranged via a Mg-dependent methyl migration to produce 3-hydroxy-3-methyl-2-ketobutyrate (HMKB). In the reductase reaction, this 2-ketoacid undergoes a metal-dependent reduction by NADPH to yield (R)-2,3-dihydroxy-isovalerate. This Sorangium cellulosum (strain So ce56) (Polyangium cellulosum (strain So ce56)) protein is Ketol-acid reductoisomerase (NADP(+)).